Consider the following 148-residue polypeptide: Protein E6 (148 aa).

2 zinc fingers span residues C34–C71 and C108–C144.

It belongs to the papillomaviridae E6 protein family. In terms of assembly, forms homodimers. Interacts with ubiquitin-protein ligase UBE3A/E6-AP; this interaction stimulates UBE3A ubiquitin activity. Interacts with host BAK1.

The protein localises to the host cytoplasm. The protein resides in the host nucleus. Its function is as follows. Plays a major role in the induction and maintenance of cellular transformation. E6 associates with host UBE3A/E6-AP ubiquitin-protein ligase and modulates its activity. Protects host keratinocytes from apoptosis by mediating the degradation of host BAK1. May also inhibit host immune response. The sequence is that of Protein E6 from Human papillomavirus 9.